Consider the following 76-residue polypeptide: RLSVLRYYRRPDLRILPQETFEDTCRLPSDRGRCKASFERWYFNGRTCAKFIYGGCGGNGNKFPTQEACMKRCGKA.

Positions 1-21 (RLSVLRYYRRPDLRILPQETF) are cleaved as a signal peptide. Residues 25-73 (CRLPSDRGRCKASFERWYFNGRTCAKFIYGGCGGNGNKFPTQEACMKRC) enclose the BPTI/Kunitz inhibitor domain. 3 disulfides stabilise this stretch: C25–C73, C34–C56, and C48–C69.

Belongs to the venom Kunitz-type family. 02 (native) subfamily. In terms of tissue distribution, expressed by the venom gland.

It is found in the secreted. Serine protease inhibitor that inhibits trypsin at a molar ratio of 1:1. The polypeptide is Kunitz-type serine protease inhibitor HNTX-03141017 (Cyriopagopus hainanus (Chinese bird spider)).